The sequence spans 186 residues: Peptidyl-tRNA hydrolase (186 aa).

Tyrosine 14 serves as a coordination point for tRNA. Residue histidine 19 is the Proton acceptor of the active site. Phenylalanine 64, asparagine 66, and asparagine 112 together coordinate tRNA.

It belongs to the PTH family. As to quaternary structure, monomer.

The protein resides in the cytoplasm. The enzyme catalyses an N-acyl-L-alpha-aminoacyl-tRNA + H2O = an N-acyl-L-amino acid + a tRNA + H(+). In terms of biological role, hydrolyzes ribosome-free peptidyl-tRNAs (with 1 or more amino acids incorporated), which drop off the ribosome during protein synthesis, or as a result of ribosome stalling. Functionally, catalyzes the release of premature peptidyl moieties from peptidyl-tRNA molecules trapped in stalled 50S ribosomal subunits, and thus maintains levels of free tRNAs and 50S ribosomes. This chain is Peptidyl-tRNA hydrolase, found in Mycoplasma capricolum subsp. capricolum (strain California kid / ATCC 27343 / NCTC 10154).